Here is a 241-residue protein sequence, read N- to C-terminus: Proteasome subunit beta type-6 (241 aa).

The propeptide occupies 1 to 19 (MATIASEYSSEASNTPIEH).

Belongs to the peptidase T1B family. The 26S proteasome consists of a 20S proteasome core and two 19S regulatory subunits. The 20S proteasome core is composed of 28 subunits that are arranged in four stacked rings, resulting in a barrel-shaped structure. The two end rings are each formed by seven alpha subunits, and the two central rings are each formed by seven beta subunits. The catalytic chamber with the active sites is on the inside of the barrel.

Its subcellular location is the cytoplasm. The protein localises to the nucleus. Non-catalytic component of the proteasome which degrades poly-ubiquitinated proteins in the cytoplasm and in the nucleus. It is essential for the regulated turnover of proteins and for the removal of misfolded proteins. The proteasome is a multicatalytic proteinase complex that is characterized by its ability to cleave peptides with Arg, Phe, Tyr, Leu, and Glu adjacent to the leaving group at neutral or slightly basic pH. It has an ATP-dependent proteolytic activity. The sequence is that of Proteasome subunit beta type-6 (PRE7) from Saccharomyces cerevisiae (strain ATCC 204508 / S288c) (Baker's yeast).